We begin with the raw amino-acid sequence, 172 residues long: Large ribosomal subunit protein uL10 (172 aa).

It belongs to the universal ribosomal protein uL10 family. In terms of assembly, part of the ribosomal stalk of the 50S ribosomal subunit. The N-terminus interacts with L11 and the large rRNA to form the base of the stalk. The C-terminus forms an elongated spine to which L12 dimers bind in a sequential fashion forming a multimeric L10(L12)X complex.

Functionally, forms part of the ribosomal stalk, playing a central role in the interaction of the ribosome with GTP-bound translation factors. In Caulobacter sp. (strain K31), this protein is Large ribosomal subunit protein uL10.